Consider the following 516-residue polypeptide: MKKRIAIIGAGLSGIAAIKQLTDEGHHVVCYEKAESFGGVFAAKKIYEDLHLTISNYFMAYSDFLPTEQSLKFWSKQEYVQYLKRYLAHFDIEKHIVYNHKVVNAEQNGDKWTVKVQSGSGEETESEFDMVVVCSGHFQEPKTPDLEGLSDFMGDIIHSNDYRDKMAFKGKRVMCVGLGESSADITSEISEVAEKCILSLRRYPAVAPRYMAFQEDPYFTIDTSWLTSRIVNKLPFSYHRGITKNIFHKYVNSRNLHLRIRGEWLHKSGPSIHQAVTKNERLFKPIAEGKVLPNIGGIERFEGNTVIFKDGTHEEIDAIVFCTGYKLSFPFLQHKIECMRDLYKQIFIPSVGSSLAFVGFVRPQQGGIPVIAEMQSRYLAQLASGVKSLPSLEKQKEVIMEDANHWETEYHITPHVASLVNYCHYMDSMARLVGCMPKTPSLLKDPLLRVKLLHNPQFAAQYRLEGPHPMSESSRDFLVNFPNISTWPRIIHFECALAMQKLLSFLSMDNLRELKK.

FAD is bound by residues S13, E32, V40, F41, H51, V102, and Q365.

It belongs to the FMO family. It depends on FAD as a cofactor.

The catalysed reaction is 2 bromide + 4-hydroxybenzoate + 2 NADPH + 2 O2 + 5 H(+) = 2,4-dibromophenol + CO2 + 2 NADP(+) + 4 H2O. It carries out the reaction bromide + 4-hydroxybenzoate + NADPH + O2 + 2 H(+) = 3-bromo-4-hydroxybenzoate + NADP(+) + 2 H2O. The enzyme catalyses 3-bromo-4-hydroxybenzoate + bromide + NADPH + O2 + 3 H(+) = 2,4-dibromophenol + CO2 + NADP(+) + 2 H2O. It catalyses the reaction 3,4-dihydroxybenzoate + 2 bromide + 2 NADPH + 2 O2 + 5 H(+) = 3,5-dibromobenzene-1,2-diol + CO2 + 2 NADP(+) + 4 H2O. The catalysed reaction is 3,4-dihydroxybenzoate + bromide + NADPH + O2 + 2 H(+) = 3-bromo-4,5-dihydroxybenzoate + NADP(+) + 2 H2O. It carries out the reaction 3-bromo-4,5-dihydroxybenzoate + bromide + NADPH + O2 + 3 H(+) = 3,5-dibromobenzene-1,2-diol + CO2 + NADP(+) + 2 H2O. Brominase involved in the biosynthesis of polybrominated aromatic organic compounds. Catalyzes the bromination of 4-hydroxybenzoate (4-HBA) to 3-bromo-4-hydroxybenzoate, followed by bromination and decarboxylation of 3-bromo-4-hydroxybenzoate to 2,4-dibromophenol. Can also use 3,4-dihydroxybenzoate, with lower efficiency, forming 3-bromo-4,5-dihydroxybenzoate and 3,5-dibromobenzene-1,2-diol. The polypeptide is 4-hydroxybenzoate brominase (decarboxylating) (Marinomonas mediterranea (strain ATCC 700492 / JCM 21426 / NBRC 103028 / MMB-1)).